Here is a 531-residue protein sequence, read N- to C-terminus: Cation transporter HKT1;3 (531 aa).

Over 1 to 46 the chain is Cytoplasmic; the sequence is MNHCLVVSHKKLQTFRTFAASKFSSFTKSAQKSIKYSFQFIYQNNP. 2 helical membrane-spanning segments follow: residues 47-67 and 108-128; these read LFVHVAYFALISFAGYGSLKV and LWVLTILMLIGGEVFTSMLGI. The Cytoplasmic portion of the chain corresponds to 129–190; the sequence is HFMRAEFGTK…GGHVEPKTIK (62 aa). Helical transmembrane passes span 191-211 and 264-284; these read FLGFVVMGYLLITNLGGSLLI and ILLLLILPQILAGNTLFAPCL. Residues 285–321 lie on the Cytoplasmic side of the membrane; that stretch reads RLMVWSLEKITGKKDCRYILEYPKAIGYKHLMSTRES. 2 consecutive transmembrane segments (helical) span residues 322–342 and 383–403; these read VYLTLTVVSLIILQTVLFLSL and SAILVLYTIMMYLPGYTSFLP. At 404–421 the chain is on the cytoplasmic side; sequence RHDGEDSKTEKINKRKGL. The next 2 helical transmembrane spans lie at 422–442 and 494–514; these read LENWIFSHMSYLAIFVMLICI and YGFAGKWSDNGKAILIIVMLF. Over 515–530 the chain is Cytoplasmic; sequence GRLKTFNMKGGRAWKL.

Belongs to the TrkH potassium transport family. HKT (TC 2.A.38.3) subfamily. Interacts with CNIH1. In terms of tissue distribution, weakly expressed. In roots, expressed in epidermis, exodermis, cortex, and sieve elements and companion cells of phloem. In mature leaves, expressed in large highly vacuolated cells of the adaxial epidermis, phloem and xylem.

The protein localises to the endoplasmic reticulum membrane. It is found in the golgi apparatus membrane. It catalyses the reaction Na(+)(in) = Na(+)(out). Its function is as follows. Functions as a highly-selective sodium transporter. Does not seem to function as sodium-potassium cotransporter. May be involved in turgor changes for rolling and unrolling of leaves in response to environmental variations. The protein is Cation transporter HKT1;3 of Oryza sativa subsp. japonica (Rice).